A 488-amino-acid polypeptide reads, in one-letter code: Serine hydroxymethyltransferase, mitochondrial (488 aa).

The transit peptide at 1–20 directs the protein to the mitochondrion; sequence MAVLRQFVKNSYSSIPKRFY. The residue at position 265 (lysine 265) is an N6-(pyridoxal phosphate)lysine.

This sequence belongs to the SHMT family. In terms of assembly, homotetramer. The cofactor is pyridoxal 5'-phosphate.

Its subcellular location is the mitochondrion. The enzyme catalyses (6R)-5,10-methylene-5,6,7,8-tetrahydrofolate + glycine + H2O = (6S)-5,6,7,8-tetrahydrofolate + L-serine. It participates in one-carbon metabolism; tetrahydrofolate interconversion. Its function is as follows. Interconversion of serine and glycine. In Schizosaccharomyces pombe (strain 972 / ATCC 24843) (Fission yeast), this protein is Serine hydroxymethyltransferase, mitochondrial (shm2).